Reading from the N-terminus, the 568-residue chain is Arginine--tRNA ligase (568 aa).

The short motif at 129–139 (ANPTGPLHIGH) is the 'HIGH' region element.

The protein belongs to the class-I aminoacyl-tRNA synthetase family. Monomer.

It is found in the cytoplasm. The catalysed reaction is tRNA(Arg) + L-arginine + ATP = L-arginyl-tRNA(Arg) + AMP + diphosphate. The polypeptide is Arginine--tRNA ligase (Wolbachia pipientis wMel).